Here is a 710-residue protein sequence, read N- to C-terminus: DNA ligase (710 aa).

The disordered stretch occupies residues 1–36; sequence MTSSSPRHADPDENPYVEAPPTDFEPVGALSEDEAT. Residues 63–67, 111–112, and Glu147 contribute to the NAD(+) site; these read DETYD and SI. Lys149 (N6-AMP-lysine intermediate) is an active-site residue. NAD(+)-binding residues include Arg170, Glu206, and Lys353. Cys444, Cys447, Cys460, and Cys466 together coordinate Zn(2+). One can recognise a BRCT domain in the interval 623-710; it reads ETGDALDGLT…ERGVAWPPEE (88 aa). Residues 657-689 are disordered; the sequence is ATSSVSGNTDYLVAGESPGRSKRDDADAEGVPV.

The protein belongs to the NAD-dependent DNA ligase family. LigA subfamily. Requires Mg(2+) as cofactor. The cofactor is Mn(2+).

It carries out the reaction NAD(+) + (deoxyribonucleotide)n-3'-hydroxyl + 5'-phospho-(deoxyribonucleotide)m = (deoxyribonucleotide)n+m + AMP + beta-nicotinamide D-nucleotide.. Its function is as follows. DNA ligase that catalyzes the formation of phosphodiester linkages between 5'-phosphoryl and 3'-hydroxyl groups in double-stranded DNA using NAD as a coenzyme and as the energy source for the reaction. It is essential for DNA replication and repair of damaged DNA. In Halorubrum lacusprofundi (strain ATCC 49239 / DSM 5036 / JCM 8891 / ACAM 34), this protein is DNA ligase.